A 92-amino-acid polypeptide reads, in one-letter code: Putative membrane protein insertion efficiency factor (92 aa).

This sequence belongs to the UPF0161 family.

It localises to the cell inner membrane. Its function is as follows. Could be involved in insertion of integral membrane proteins into the membrane. This is Putative membrane protein insertion efficiency factor from Synechococcus sp. (strain CC9902).